The chain runs to 76 residues: Esculentin-2SN1 (76 aa).

An N-terminal signal peptide occupies residues 1–22 (MFTMKKSLLFLFFLGTISLSLC). Residues 23–37 (EQERGADEDDGGEEV) constitute a propeptide that is removed on maturation. A disulfide bridge connects residues Cys-70 and Cys-76.

This sequence belongs to the frog skin active peptide (FSAP) family. Esculentin subfamily. Expressed by the skin glands.

The protein resides in the secreted. Its function is as follows. Antimicrobial peptide. Active against some Gram-negative and a variety of Gram-positive bacterial strains. Not active against fungi. Shows very weak hemolytic activity against human erythrocytes. This is Esculentin-2SN1 from Sylvirana spinulosa (Fine-spined frog).